Reading from the N-terminus, the 78-residue chain is Acyl carrier protein AcpP (78 aa).

Residues 2–77 (SDIAERVKKI…DAVKFIEKAQ (76 aa)) form the Carrier domain. The residue at position 37 (Ser37) is an O-(pantetheine 4'-phosphoryl)serine.

The protein belongs to the acyl carrier protein (ACP) family. In terms of processing, 4'-phosphopantetheine is transferred from CoA to a specific serine of apo-ACP by AcpS. This modification is essential for activity because fatty acids are bound in thioester linkage to the sulfhydryl of the prosthetic group.

The protein resides in the cytoplasm. It functions in the pathway lipid metabolism; fatty acid biosynthesis. Its function is as follows. Carrier of the growing fatty acid chain in fatty acid biosynthesis. This chain is Acyl carrier protein AcpP, found in Agrobacterium fabrum (strain C58 / ATCC 33970) (Agrobacterium tumefaciens (strain C58)).